A 384-amino-acid polypeptide reads, in one-letter code: Anhydro-N-acetylmuramic acid kinase (384 aa).

9-16 (GTSADGVD) contacts ATP.

It belongs to the anhydro-N-acetylmuramic acid kinase family.

The enzyme catalyses 1,6-anhydro-N-acetyl-beta-muramate + ATP + H2O = N-acetyl-D-muramate 6-phosphate + ADP + H(+). The protein operates within amino-sugar metabolism; 1,6-anhydro-N-acetylmuramate degradation. It participates in cell wall biogenesis; peptidoglycan recycling. Its function is as follows. Catalyzes the specific phosphorylation of 1,6-anhydro-N-acetylmuramic acid (anhMurNAc) with the simultaneous cleavage of the 1,6-anhydro ring, generating MurNAc-6-P. Is required for the utilization of anhMurNAc either imported from the medium or derived from its own cell wall murein, and thus plays a role in cell wall recycling. This chain is Anhydro-N-acetylmuramic acid kinase, found in Synechococcus sp. (strain CC9311).